The primary structure comprises 326 residues: G-protein coupled receptor 171 (326 aa).

At 1 to 19 (MTNSSMFCPIYRDLEPFTY) the chain is on the extracellular side. A helical transmembrane segment spans residues 20-40 (FFYLVYLIGIIGSCFATWAFI). The Cytoplasmic portion of the chain corresponds to 41 to 48 (QKSTNHRC). Residues 49-69 (VSIYLINLLTADFLLTLALPV) traverse the membrane as a helical segment. Topologically, residues 70–89 (KIVVDLGVAPWKLRIFHCQV) are extracellular. An intrachain disulfide couples Cys87 to Cys165. A helical transmembrane segment spans residues 90 to 110 (TACLIYINMYLSIIFLAFVSI). Residues 111-133 (DRCLQLVHSCKIYRIQEPGFAKM) lie on the Cytoplasmic side of the membrane. Residues 134 to 154 (ISAVVWLMVLLIMVPNMVIPI) traverse the membrane as a helical segment. The Extracellular segment spans residues 155 to 182 (KNIKEKSNVGCMEFKREFGKNWHLLTNF). A helical transmembrane segment spans residues 183-203 (ICVAIFLNFSAIILISNFLVI). At 204–221 (RQLYRNRDNANYPSVKSA) the chain is on the cytoplasmic side. Residues 222–242 (LLNILLVTASYIICFVPYHAV) form a helical membrane-spanning segment. Residues 243–268 (RIPYTLSQTEVISDCSTRIALFKAKE) lie on the Extracellular side of the membrane. The chain crosses the membrane as a helical span at residues 269–289 (ATLLLAVSNLCFDPILYYHLS). The Cytoplasmic segment spans residues 290 to 326 (KAFRLKVTETFASPQKMKAREEKPRRENDVQSTGSAC). The interval 305–326 (KMKAREEKPRRENDVQSTGSAC) is disordered. Residues 307–318 (KAREEKPRREND) are compositionally biased toward basic and acidic residues.

This sequence belongs to the G-protein coupled receptor 1 family.

It localises to the cell membrane. In terms of biological role, G-protein coupled receptor for Big LEN, a 16-amino acid neuropeptide produced from the precursor protein, proSAAS (encoded by PCSK1N). Acts through a G(i)-alpha-mediated pathway in response to Big LEN. Big LEN-GPR171 system plays an important role in regulating feeding and metabolism. Also plays a role in modulating fear and anxiety-like behaviors in the basolateral amygdala. Big LEN-GPR171 modulates the mu-type opioid receptor signaling and antinociception. Acts as a negative regulator T cell function. This Rattus norvegicus (Rat) protein is G-protein coupled receptor 171.